Consider the following 397-residue polypeptide: Cathepsin E-A (397 aa).

Positions 1–16 (MRQILVLLLFATLVYG) are cleaved as a signal peptide. A propeptide spans 17–52 (LIRVPLKRQKSIRKTLKEKGKLSHIWTQQGIDMVQY) (activation peptide). One can recognise a Peptidase A1 domain in the interval 74 to 385 (YFGEISVGTP…DRGNNRVGLA (312 aa)). Asn86 carries an N-linked (GlcNAc...) asparagine glycan. Asp92 is a catalytic residue. A disulfide bond links Cys105 and Cys110. An N-linked (GlcNAc...) asparagine glycan is attached at Asn130. A disulfide bridge links Cys268 with Cys272. Asp277 is a catalytic residue. Cys310 and Cys344 are oxidised to a cystine.

This sequence belongs to the peptidase A1 family. Homodimer; disulfide-linked. Post-translationally, glycosylated. Contains high mannose-type oligosaccharide. Expressed predominantly in the larval foregut and the anterior and posterior adult stomach.

It localises to the endosome. The enzyme catalyses Similar to cathepsin D, but slightly broader specificity.. Functionally, may have a role in immune function. Probably involved in the processing of antigenic peptides during MHC class II-mediated antigen presentation. The chain is Cathepsin E-A (ctse-a) from Xenopus laevis (African clawed frog).